The primary structure comprises 115 residues: Large ribosomal subunit protein bL19 (115 aa).

The protein belongs to the bacterial ribosomal protein bL19 family.

Functionally, this protein is located at the 30S-50S ribosomal subunit interface and may play a role in the structure and function of the aminoacyl-tRNA binding site. The sequence is that of Large ribosomal subunit protein bL19 from Citrobacter koseri (strain ATCC BAA-895 / CDC 4225-83 / SGSC4696).